We begin with the raw amino-acid sequence, 212 residues long: Putative 3-methyladenine DNA glycosylase (212 aa).

The protein belongs to the DNA glycosylase MPG family.

In Frankia casuarinae (strain DSM 45818 / CECT 9043 / HFP020203 / CcI3), this protein is Putative 3-methyladenine DNA glycosylase.